A 417-amino-acid polypeptide reads, in one-letter code: uncharacterized protein (417 aa).

Disordered regions lie at residues 1–41 and 233–262; these read MDSE…EDQA and QDSAYNDQAPSTSYHHHHHEQLEAGKSTRS. Positions 31–41 are enriched in basic and acidic residues; sequence DEDHIFHEDQA. A compositionally biased stretch (polar residues) spans 235-245; sequence SAYNDQAPSTS.

This is an uncharacterized protein from Caenorhabditis elegans.